The sequence spans 488 residues: Glycogen synthase (488 aa).

K16 contributes to the ADP-alpha-D-glucose binding site.

This sequence belongs to the glycosyltransferase 1 family. Bacterial/plant glycogen synthase subfamily.

The catalysed reaction is [(1-&gt;4)-alpha-D-glucosyl](n) + ADP-alpha-D-glucose = [(1-&gt;4)-alpha-D-glucosyl](n+1) + ADP + H(+). It participates in glycan biosynthesis; glycogen biosynthesis. In terms of biological role, synthesizes alpha-1,4-glucan chains using ADP-glucose. The polypeptide is Glycogen synthase (Marinobacter nauticus (strain ATCC 700491 / DSM 11845 / VT8) (Marinobacter aquaeolei)).